Consider the following 493-residue polypeptide: Leucine-rich repeat-containing protein 14 (493 aa).

One copy of the LRR 1; degenerate repeat lies at 111-146 (KHALRVLDMTGLLDDGVEQDPGTMSMWDCTAAVART). Residues 194-218 (RLCCRDLRAEDLPMRNTVALLQLLD) form an LRR 2; degenerate repeat. One copy of the LRR 3; degenerate repeat lies at 219-246 (AGCLRRVDLRFNNLGLRGLSVIIPHVAR). One copy of the LRR 4; degenerate repeat lies at 247–282 (FQHLASLRLHYVHGDSRQPSVDGEDNFRYFLAQMGR). LRR repeat units lie at residues 283–307 (FTCL…LSTL), 308–339 (QSPL…AHLK), 340–360 (KLDL…QGLL), 364–391 (AATL…ILTQ), and 392–416 (CASL…LLRD).

This sequence belongs to the PRAME family. LRRC14 subfamily. Interacts with IKBKB; disrupts IKBKB-IKBKG interaction preventing I-kappa-B-kinase (IKK) core complex formation and leading to a decrease of IKBKB phosphorylation and NF-kappaB activation. Interacts with CHUK.

The protein resides in the cytoplasm. In terms of biological role, negatively regulates Toll-like receptor-mediated NF-kappa-B signaling by disrupting IKK core complex formation through interaction with IKBKB. The sequence is that of Leucine-rich repeat-containing protein 14 from Homo sapiens (Human).